Consider the following 2028-residue polypeptide: Protein Daple (2028 aa).

The 121-residue stretch at 11 to 131 folds into the Calponin-homology (CH) domain; that stretch reads LFLQSPLVTW…KVLLLVLGCA (121 aa). The tract at residues 222–250 is disordered; sequence AQHPPSPIKSSSADSTPSPTSSLSSEDKQ. 2 positions are modified to phosphoserine: serine 227 and serine 239. A compositionally biased stretch (low complexity) spans 229–245; it reads IKSSSADSTPSPTSSLS. 4 coiled-coil regions span residues 247-428, 456-1017, 1045-1094, and 1139-1393; these read EDKQ…SMNE, ELNE…QGEG, HKEA…SSQI, and LQNH…DQYK. Position 486 is a phosphoserine (serine 486). Over residues 1011-1024 the composition is skewed to polar residues; sequence RQNQGEGQHLQNSF. The disordered stretch occupies residues 1011–1043; sequence RQNQGEGQHLQNSFKHPAGKTAASHQGKEAWGP. Residues 1419–1428 show a composition bias toward basic and acidic residues; sequence KEGSRERLKS. Disordered stretches follow at residues 1419-1724 and 1736-1803; these read KEGS…GAKM and AAPT…SLSR. 3 stretches are compositionally biased toward low complexity: residues 1439–1450, 1517–1534, and 1568–1588; these read SSDPASPAASQP, SRTC…NSTP, and SRPS…PLNL. Serine 1444 is subject to Phosphoserine. The span at 1589–1604 shows a compositional bias: polar residues; it reads KGSSEQLHGRSESFSS. A Phosphoserine modification is found at serine 1601. A GBA motif is present at residues 1661 to 1691; the sequence is CSASPSSEMVTLEEFLEESNRSSPTHDTPSC. The span at 1689–1704 shows a compositional bias: basic and acidic residues; that stretch reads PSCRDDLLSDYFRKAS. Positions 1792–1803 are enriched in low complexity; the sequence is HAPASRSASLSR. At serine 1806 the chain carries Phosphoserine. The disordered stretch occupies residues 1816–2021; that stretch reads SGPEACKQES…PEPGGDPQTV (206 aa). Positions 1842–1855 are enriched in polar residues; it reads SHTLQSPAPPSSHS. The span at 1879–1897 shows a compositional bias: basic and acidic residues; it reads RPLDTRRFSLAPPKEERLA. The segment covering 1902–1924 has biased composition (low complexity); the sequence is SATAPAIATAGAGAAAAGSGSNS. Phosphothreonine is present on threonine 1954. Positions 2025–2028 match the PDZ-binding motif; sequence YGCV. Residues 2026 to 2028 form a DVL1-binding region; sequence GCV.

It belongs to the CCDC88 family. Homooligomer. Interacts with DVL1 (via PDZ domain); dissociates following initiation of non-canonical Wnt signaling. Interacts (via C-terminus) with ligand-activated Wnt receptor FZD7; competes with DVL1 for binding to FZD7 and displaces DVL1 from ligand-activated FZD7. Interacts (via GBA motif) with guanine nucleotide-binding protein G(i) alpha subunits GNAI1, GNAI2 and GNAI3 (inactive GDP-bound form); interacts with higher affinity with GNAI1 and GNAI3 than with GNAI2 and interaction leads to G(i) alpha subunit activation. Does not interact with GNAO1.

Its subcellular location is the cytoplasm. It is found in the cell junction. Its function is as follows. Required for activation of guanine nucleotide-binding proteins (G-proteins) during non-canonical Wnt signaling. Binds to ligand-activated Wnt receptor FZD7, displacing DVL1 from the FZD7 receptor and leading to inhibition of canonical Wnt signaling. Acts as a non-receptor guanine nucleotide exchange factor by also binding to guanine nucleotide-binding protein G(i) alpha (Gi-alpha) subunits, leading to their activation. Binding to Gi-alpha subunits displaces the beta and gamma subunits from the heterotrimeric G-protein complex, triggering non-canonical Wnt responses such as activation of RAC1 and PI3K-AKT signaling. Promotes apical constriction of cells via ARHGEF18. The chain is Protein Daple (CCDC88C) from Homo sapiens (Human).